The primary structure comprises 491 residues: Conidiogenone synthase PchP450 (491 aa).

The helical transmembrane segment at 2-22 (LLLWFGFFSFVCGLVIYRLQF) threads the bilayer. Cys-430 contacts heme.

It belongs to the cytochrome P450 family. Heme serves as cofactor.

It is found in the membrane. The protein operates within secondary metabolite biosynthesis; terpenoid biosynthesis. Cytochrome P450 monooxygenase; part of the gene cluster that mediates the biosynthesis of conidiogenone, a diterpene known to induce the conidiation. The bifunctional terpene synthase PrDS converts isopentenyl diphosphate (IPP) and dimethylallyl diphosphate (DMAPP) into deoxyconidiogenol. The C-terminal prenyltransferase (PT) domain of PrDS catalyzes formation of GGPP, whereas the N-terminal terpene cyclase (TC) domain catalyzes the cyclization of GGPP into deoxyconidiogenol. The cytochrome P450 monooxygenase PrP450 then catalyzes two rounds of oxidation to furnish conidiogenone. The chain is Conidiogenone synthase PchP450 from Penicillium rubens (strain ATCC 28089 / DSM 1075 / NRRL 1951 / Wisconsin 54-1255) (Penicillium chrysogenum).